A 403-amino-acid polypeptide reads, in one-letter code: uncharacterized protein (403 aa).

Residue histidine 81 participates in Zn(2+) binding. Residue aspartate 83 is part of the active site. Position 114 (aspartate 114) interacts with Zn(2+). The active-site Proton acceptor is the glutamate 148. Positions 149, 174, and 374 each coordinate Zn(2+).

The protein belongs to the peptidase M20A family. Zn(2+) serves as cofactor. Requires Co(2+) as cofactor.

This is an uncharacterized protein from Escherichia coli O157:H7.